The primary structure comprises 1066 residues: Isoleucine--tRNA ligase (1066 aa).

A 'HIGH' region motif is present at residues Pro-47–Thr-57. The 'KMSKS' region signature appears at Lys-594–Ser-598. Residue Lys-597 participates in ATP binding.

Belongs to the class-I aminoacyl-tRNA synthetase family. IleS type 2 subfamily. As to quaternary structure, monomer. Zn(2+) serves as cofactor.

It is found in the cytoplasm. The catalysed reaction is tRNA(Ile) + L-isoleucine + ATP = L-isoleucyl-tRNA(Ile) + AMP + diphosphate. Catalyzes the attachment of isoleucine to tRNA(Ile). As IleRS can inadvertently accommodate and process structurally similar amino acids such as valine, to avoid such errors it has two additional distinct tRNA(Ile)-dependent editing activities. One activity is designated as 'pretransfer' editing and involves the hydrolysis of activated Val-AMP. The other activity is designated 'posttransfer' editing and involves deacylation of mischarged Val-tRNA(Ile). In Methanocorpusculum labreanum (strain ATCC 43576 / DSM 4855 / Z), this protein is Isoleucine--tRNA ligase.